A 120-amino-acid polypeptide reads, in one-letter code: MASERSTDVQAFIGELDGGVFETKIGAVLSEVASGVMNTKTKGKVSLNLEIEPFDENRLKIKHKLSYVRPTNRGKISEEDTTETPMYVNRGGRLTILQEDQGQLLTLAGEPDGKLRAAGH.

To phage T4 y06Q.

This is an uncharacterized protein from Escherichia coli (strain K12).